The primary structure comprises 61 residues: Metallothionein (61 aa).

Position 1 is an N-acetylmethionine (Met1). Residues 1–29 (MDPNCSCAAGGSCTCAGSCKCKECKCTSC) form a beta region. A divalent metal cation contacts are provided by Cys5, Cys7, Cys13, Cys15, Cys19, Cys21, Cys24, Cys26, Cys29, Cys33, Cys34, Cys36, Cys37, Cys41, Cys44, Cys48, Cys50, Cys57, Cys59, and Cys60. Positions 30 to 61 (KKSCCSCCPPGCTKCAQGCVCKGASDKCNCCA) are alpha.

The protein belongs to the metallothionein superfamily. Type 1 family. In terms of assembly, monomer.

Metallothioneins have a high content of cysteine residues that bind various heavy metals. The chain is Metallothionein from Balaena mysticetus (Bowhead whale).